Here is a 165-residue protein sequence, read N- to C-terminus: Chemotaxis protein CheW (165 aa).

This sequence belongs to the CheW family.

Plays an essential role in chemotaxis signal transduction system in order to colonize the host stomach. In Helicobacter pylori (strain ATCC 700392 / 26695) (Campylobacter pylori), this protein is Chemotaxis protein CheW.